Here is a 569-residue protein sequence, read N- to C-terminus: Nuclear control of ATPase protein 2 (569 aa).

The next 2 membrane-spanning stretches (helical) occupy residues 279–299 (WPTILIALAGGPAGIAAIWNA) and 442–462 (LVFGIVSISPALLILYVLCNS).

It is found in the mitochondrion membrane. In terms of biological role, involved in the mitochondrial expression of subunits 6 and 8 of the F0-F1 ATP synthase. The sequence is that of Nuclear control of ATPase protein 2 (NCA2) from Eremothecium gossypii (strain ATCC 10895 / CBS 109.51 / FGSC 9923 / NRRL Y-1056) (Yeast).